The sequence spans 707 residues: Leucine-rich repeat neuronal protein 3 (707 aa).

The N-terminal stretch at 1-22 (MKDTPLQVHVLLGLAITTLVQA) is a signal peptide. One can recognise an LRRNT domain in the interval 23 to 69 (IDKKVDCPQLCTCEIRPWFTPRSIYMEASTVDCNDLGLLNFPARLPA). At 23-626 (IDKKVDCPQL…DGKEYGKNHT (604 aa)) the chain is on the extracellular side. 12 LRR repeats span residues 70–91 (DTQI…TDFP), 93–114 (NLTG…NVQK), 117–138 (QLLS…CLYG), 141–162 (NLQE…AFIG), 165–186 (NLLR…WFDA), 189–210 (NLEI…NFQP), 213–234 (KLRS…ALAG), 237–258 (NLES…ALQK), 261–282 (NLKF…DFSN), 285–304 (HLKE…DSLA), 310–332 (DLRK…AFFR), and 335–358 (KLES…ESLP). N-linked (GlcNAc...) asparagine glycans are attached at residues asparagine 93 and asparagine 103. N-linked (GlcNAc...) asparagine glycosylation is present at asparagine 223. In terms of domain architecture, LRRCT spans 368–421 (NPIRCDCVIRWINMNKTNIRFMEPDSLFCVDPPEFQGQNVRQVHFRDMMEICLP). N-linked (GlcNAc...) asparagine glycosylation is present at asparagine 382. One can recognise an Ig-like C2-type domain in the interval 421-514 (PLIAPESFPS…DLKSIMIKVG (94 aa)). An intrachain disulfide couples cysteine 444 to cysteine 496. Residues asparagine 522, asparagine 579, asparagine 608, and asparagine 624 are each glycosylated (N-linked (GlcNAc...) asparagine). A Fibronectin type-III domain is found at 523-614 (GSLNIKIRDI…QCVNVTTKSL (92 aa)). The helical transmembrane segment at 627-647 (VFVACVGGLLGIIGVMCLFSC) threads the bilayer. Residues 648–707 (VSQEGSSEGEHSYAVNHCHKPALAFSELYPPLINLWESSKEKRATLEVKATAIGVPTNMS) lie on the Cytoplasmic side of the membrane.

As to expression, expressed in the brain, in Stronger expression in the ventricular zone and anlage of thalamus, spinal cord, and dorsal root ganglion in 11-17 dpc cerebellum and cerebral cortex in adults.

The protein localises to the membrane. The chain is Leucine-rich repeat neuronal protein 3 (Lrrn3) from Mus musculus (Mouse).